Reading from the N-terminus, the 129-residue chain is Small ribosomal subunit protein uS11 (129 aa).

The protein belongs to the universal ribosomal protein uS11 family. Part of the 30S ribosomal subunit. Interacts with proteins S7 and S18. Binds to IF-3.

Its function is as follows. Located on the platform of the 30S subunit, it bridges several disparate RNA helices of the 16S rRNA. Forms part of the Shine-Dalgarno cleft in the 70S ribosome. The sequence is that of Small ribosomal subunit protein uS11 from Pectobacterium atrosepticum (strain SCRI 1043 / ATCC BAA-672) (Erwinia carotovora subsp. atroseptica).